A 446-amino-acid chain; its full sequence is tRNA-2-methylthio-N(6)-dimethylallyladenosine synthase (446 aa).

One can recognise an MTTase N-terminal domain in the interval 3 to 124 (KKLYIKTYGC…LPELISKVVR (122 aa)). 6 residues coordinate [4Fe-4S] cluster: cysteine 12, cysteine 48, cysteine 87, cysteine 162, cysteine 166, and cysteine 169. In terms of domain architecture, Radical SAM core spans 148–380 (YPQGASSFIS…QKELAAQQLA (233 aa)). A TRAM domain is found at 383-446 (ESCIGSTMKV…LNSLSGEIYR (64 aa)).

It belongs to the methylthiotransferase family. MiaB subfamily. In terms of assembly, monomer. It depends on [4Fe-4S] cluster as a cofactor.

The protein localises to the cytoplasm. The catalysed reaction is N(6)-dimethylallyladenosine(37) in tRNA + (sulfur carrier)-SH + AH2 + 2 S-adenosyl-L-methionine = 2-methylsulfanyl-N(6)-dimethylallyladenosine(37) in tRNA + (sulfur carrier)-H + 5'-deoxyadenosine + L-methionine + A + S-adenosyl-L-homocysteine + 2 H(+). In terms of biological role, catalyzes the methylthiolation of N6-(dimethylallyl)adenosine (i(6)A), leading to the formation of 2-methylthio-N6-(dimethylallyl)adenosine (ms(2)i(6)A) at position 37 in tRNAs that read codons beginning with uridine. This Rickettsia bellii (strain RML369-C) protein is tRNA-2-methylthio-N(6)-dimethylallyladenosine synthase.